A 407-amino-acid chain; its full sequence is Magnesium-protoporphyrin IX monomethyl ester [oxidative] cyclase 1, chloroplastic (407 aa).

The span at 1–10 (MQTTLKQQRA) shows a compositional bias: polar residues. The segment at 1–28 (MQTTLKQQRASGRVSARQPFRSAAVARP) is disordered.

Belongs to the AcsF family. Requires Fe cation as cofactor.

The protein resides in the plastid. Its subcellular location is the chloroplast thylakoid membrane. The enzyme catalyses Mg-protoporphyrin IX 13-monomethyl ester + 3 NADPH + 3 O2 + 2 H(+) = 3,8-divinyl protochlorophyllide a + 3 NADP(+) + 5 H2O. It participates in porphyrin-containing compound metabolism; chlorophyll biosynthesis. In terms of biological role, catalyzes the formation of the isocyclic ring in chlorophyll biosynthesis under oxygen- and copper-deficient conditions. Mediates the cyclase reaction, which results in the formation of divinylprotochlorophyllide (Pchlide) characteristic of all chlorophylls from magnesium-protoporphyrin IX 13-monomethyl ester (MgPMME). This chain is Magnesium-protoporphyrin IX monomethyl ester [oxidative] cyclase 1, chloroplastic (CRD1), found in Chlamydomonas reinhardtii (Chlamydomonas smithii).